The sequence spans 534 residues: SWI/SNF complex component SNF12 homolog (534 aa).

Residues 1-12 are compositionally biased toward polar residues; the sequence is MSGNNNNPQKPQ. Disordered stretches follow at residues 1–33 and 78–132; these read MSGN…PGNQ and MTMN…SPMR. The span at 94-105 shows a compositional bias: low complexity; sequence PSSPSLTTPGSL. Residues 314-391 enclose the SWIB/MDM2 domain; that stretch reads YVPEKFKLST…SQKISHHLSP (78 aa).

This sequence belongs to the SMARCD family. Part of a SWI-SNF complex.

Its subcellular location is the nucleus. Involved in transcriptional activation and repression of select genes by chromatin remodeling (alteration of DNA-nucleosome topology). The chain is SWI/SNF complex component SNF12 homolog from Arabidopsis thaliana (Mouse-ear cress).